A 239-amino-acid chain; its full sequence is Sugar fermentation stimulation protein homolog (239 aa).

This sequence belongs to the SfsA family.

In Alcanivorax borkumensis (strain ATCC 700651 / DSM 11573 / NCIMB 13689 / SK2), this protein is Sugar fermentation stimulation protein homolog.